The chain runs to 153 residues: Ribonuclease H (153 aa).

In terms of domain architecture, RNase H type-1 spans 1–141 (MKHIEIYTDG…CDVLARDAAS (141 aa)). Residues D9, E47, D69, and D133 each contribute to the Mg(2+) site.

Belongs to the RNase H family. Monomer. Mg(2+) serves as cofactor.

The protein resides in the cytoplasm. The catalysed reaction is Endonucleolytic cleavage to 5'-phosphomonoester.. Endonuclease that specifically degrades the RNA of RNA-DNA hybrids. The sequence is that of Ribonuclease H from Pseudoalteromonas atlantica (strain T6c / ATCC BAA-1087).